The following is a 120-amino-acid chain: Large ribosomal subunit protein uL18 (120 aa).

The protein belongs to the universal ribosomal protein uL18 family. In terms of assembly, part of the 50S ribosomal subunit; part of the 5S rRNA/L5/L18/L25 subcomplex. Contacts the 5S and 23S rRNAs.

In terms of biological role, this is one of the proteins that bind and probably mediate the attachment of the 5S RNA into the large ribosomal subunit, where it forms part of the central protuberance. The protein is Large ribosomal subunit protein uL18 of Rhodopseudomonas palustris (strain BisB18).